The following is a 162-amino-acid chain: Ribosome maturation factor RimP (162 aa).

This sequence belongs to the RimP family.

It localises to the cytoplasm. Functionally, required for maturation of 30S ribosomal subunits. This chain is Ribosome maturation factor RimP, found in Streptococcus gordonii (strain Challis / ATCC 35105 / BCRC 15272 / CH1 / DL1 / V288).